The chain runs to 554 residues: Kinesin-like protein 3 (554 aa).

The Kinesin motor domain maps to 3-325 (SIKVVCRIRP…LRFGHRAKSI (323 aa)). Residues 84 to 91 (GQTGSGKT) and 233 to 240 (GSESVGKS) contribute to the ATP site. Residues 446–473 (LSSTKQQLSDLMTALGDAQERYVELVKN) are a coiled coil.

The protein belongs to the TRAFAC class myosin-kinesin ATPase superfamily. Kinesin family.

The protein localises to the cytoplasm. It is found in the cytoskeleton. In terms of biological role, cytoplasmic motor that could play a role in Golgi membrane recycling. In Schizosaccharomyces pombe (strain 972 / ATCC 24843) (Fission yeast), this protein is Kinesin-like protein 3 (klp3).